We begin with the raw amino-acid sequence, 315 residues long: BTB/POZ domain-containing adapter for CUL3-mediated RhoA degradation protein 3 (315 aa).

Residue M1 is modified to N-acetylmethionine. Residue S23 is modified to Phosphoserine. The region spanning 32-100 (KYVKLNVGGA…LRDGAVPLPE (69 aa)) is the BTB domain. The short motif at 239 to 245 (QTKVEFP) is the Interaction with PCNA element. The interval 269–294 (NALLEATGGAAGRSHHLDEDEERERE) is disordered.

This sequence belongs to the BACURD family. As to quaternary structure, homotetramer; forms a two-fold symmetric tetramer in solution. Interacts with CUL3; interaction is direct and forms a 5:5 heterodecamer. Component of the BCR(BACURD3) E3 ubiquitin ligase complex, at least composed of CUL3, KCTD10/BACURD3 and RBX1. Interacts with DNA polymerase delta subunit 2/POLD2. Interacts with PCNA. As to expression, expressed at highest levels in lung. Also detected in testis and heart. Very low expression, if any, in brain, liver, spleen, kidney and skeletal muscle.

It localises to the nucleus. It participates in protein modification; protein ubiquitination. Functionally, substrate-specific adapter of a BCR (BTB-CUL3-RBX1) E3 ubiquitin-protein ligase complex. The BCR(BACURD3) E3 ubiquitin ligase complex mediates the ubiquitination of target proteins, leading to their degradation by the proteasome. The sequence is that of BTB/POZ domain-containing adapter for CUL3-mediated RhoA degradation protein 3 (Kctd10) from Rattus norvegicus (Rat).